The sequence spans 1474 residues: Adhesion G protein-coupled receptor L1 (1474 aa).

The first 24 residues, Met1 to Gly24, serve as a signal peptide directing secretion. Topologically, residues Leu25–Leu858 are extracellular. Positions Ala40–Val129 constitute an SUEL-type lectin domain. 5 disulfide bridges follow: Cys41–Cys71, Cys50–Cys128, Cys83–Cys115, Cys96–Cys102, and Cys140–Cys322. Position 42 (Glu42) interacts with alpha-L-rhamnose. An N-linked (GlcNAc...) asparagine glycan is attached at Asn98. Gly117–Lys120 is a binding site for alpha-L-rhamnose. The Olfactomedin-like domain maps to Val139–Pro398. The interval Asp400–Leu434 is disordered. Residues Pro405 to Leu434 show a composition bias toward low complexity. 2 disulfides stabilise this stretch: Cys480/Cys515 and Cys503/Cys532. N-linked (GlcNAc...) asparagine glycosylation is found at Asn531, Asn640, Asn742, Asn801, Asn806, and Asn827. In terms of domain architecture, GAIN-B spans Pro669–Tyr851. 2 disulfides stabilise this stretch: Cys802–Cys833 and Cys821–Cys835. The GPS stretch occupies residues Cys802–Tyr851. The helical transmembrane segment at Leu859 to Ile879 threads the bilayer. The Cytoplasmic segment spans residues Ser880–Asn893. The helical transmembrane segment at Thr894–Ile914 threads the bilayer. Over Asp915 to Glu920 the chain is Extracellular. A helical membrane pass occupies residues Ile921–Leu941. Topologically, residues Cys942–Lys964 are cytoplasmic. The helical transmembrane segment at Tyr965–Asp985 threads the bilayer. Residues Tyr986 to Tyr1002 lie on the Extracellular side of the membrane. A helical membrane pass occupies residues Phe1003–Met1023. Residues Val1024–Ala1050 are Cytoplasmic-facing. A helical transmembrane segment spans residues Leu1051–Ile1071. The Extracellular portion of the chain corresponds to Asn1072–Ser1075. Residues Val1076 to Phe1096 traverse the membrane as a helical segment. Residues His1097–Leu1474 lie on the Cytoplasmic side of the membrane. An Omega-N-methylarginine modification is found at Arg1194. Ser1220 carries the post-translational modification Phosphoserine. 4 disordered regions span residues Phe1248 to Asn1273, Arg1294 to Ala1328, Glu1360 to Pro1429, and Tyr1451 to Leu1474. 2 stretches are compositionally biased toward pro residues: residues Gly1302–Pro1314 and Ala1408–Pro1420. The residue at position 1473 (Ser1473) is a Phosphoserine.

It belongs to the G-protein coupled receptor 2 family. Adhesion G-protein coupled receptor (ADGR) subfamily. As to quaternary structure, forms a heterodimer, consisting of a large extracellular region (p120) non-covalently linked to a seven-transmembrane moiety (p85). Interacts with syntaxin and with proteins of the SHANK family via the PDZ domain. Interacts (via extracellular domain) with FLRT1, FLRT2 and FLRT3 (via extracellular domain). Post-translationally, autoproteolytically cleaved into 2 subunits, an extracellular subunit and a seven-transmembrane subunit. This proteolytic processing takes place early in the biosynthetic pathway, either in the endoplasmic reticulum or in the early compartment of the Golgi apparatus.

The protein localises to the cell membrane. Its subcellular location is the cell projection. The protein resides in the axon. It is found in the growth cone. It localises to the synapse. The protein localises to the presynaptic cell membrane. Its subcellular location is the synaptosome. Its function is as follows. Calcium-independent receptor of high affinity for alpha-latrotoxin, an excitatory neurotoxin present in black widow spider venom which triggers massive exocytosis from neurons and neuroendocrine cells. Receptor for TENM2 that mediates heterophilic synaptic cell-cell contact and postsynaptic specialization. Receptor probably implicated in the regulation of exocytosis. This Homo sapiens (Human) protein is Adhesion G protein-coupled receptor L1.